Here is a 361-residue protein sequence, read N- to C-terminus: D-alanine--D-alanine ligase (361 aa).

The 198-residue stretch at 139–336 (KLLLKEKEIS…FSQIIDNMIN (198 aa)) folds into the ATP-grasp domain. Residue 167–222 (EKNLGYPMIVKPARLGSSIGVSKVVDRKNFEEAVKNVLLFDNKVLVEKWINAREIN) participates in ATP binding. Mg(2+) contacts are provided by Asp296, Glu307, and Asn309.

This sequence belongs to the D-alanine--D-alanine ligase family. Mg(2+) is required as a cofactor. It depends on Mn(2+) as a cofactor.

Its subcellular location is the cytoplasm. It carries out the reaction 2 D-alanine + ATP = D-alanyl-D-alanine + ADP + phosphate + H(+). Its pathway is cell wall biogenesis; peptidoglycan biosynthesis. In terms of biological role, cell wall formation. The protein is D-alanine--D-alanine ligase of Thermosipho melanesiensis (strain DSM 12029 / CIP 104789 / BI429).